The following is a 178-amino-acid chain: ATP-dependent protease subunit HslV (178 aa).

The active site involves T7. G162, C165, and T168 together coordinate Na(+).

Belongs to the peptidase T1B family. HslV subfamily. As to quaternary structure, a double ring-shaped homohexamer of HslV is capped on each side by a ring-shaped HslU homohexamer. The assembly of the HslU/HslV complex is dependent on binding of ATP.

Its subcellular location is the cytoplasm. It carries out the reaction ATP-dependent cleavage of peptide bonds with broad specificity.. Its activity is regulated as follows. Allosterically activated by HslU binding. Its function is as follows. Protease subunit of a proteasome-like degradation complex believed to be a general protein degrading machinery. This chain is ATP-dependent protease subunit HslV, found in Cupriavidus metallidurans (strain ATCC 43123 / DSM 2839 / NBRC 102507 / CH34) (Ralstonia metallidurans).